A 361-amino-acid polypeptide reads, in one-letter code: Probable purine permease 13 (361 aa).

10 consecutive transmembrane segments (helical) span residues 35–55, 68–88, 103–123, 129–151, 156–176, 192–212, 238–258, 268–288, 289–309, and 323–343; these read WILVFISIFFLISAQAIAVLL, WISTLVQTCGFPILYLPLCFL, LVWIYLSLGFAIGLDNLLYSF, SASTYSILCSSQLAFNGVFSYYI, ITCLILFSVLFLSVSAVLVSL, LIGCLCTVFASLIYSLQLSLM, VASCVAVIGLFASGEWMLLSV, VIYVLTLVGTAVSWQLGSVGA, VALIFLVSSLFSNLIGTLSLI, and LTEVKMVAMLIAFMGFGFYIY.

Belongs to the purine permeases (TC 2.A.7.14) family.

Its subcellular location is the membrane. The polypeptide is Probable purine permease 13 (PUP13) (Arabidopsis thaliana (Mouse-ear cress)).